Here is a 413-residue protein sequence, read N- to C-terminus: Serine protease inhibitor A3L (413 aa).

The first 28 residues, 1–28, serve as a signal peptide directing secretion; it reads MAFIAALGLLMAGICPAVLCDGTLGRDT. Ser30 carries the phosphoserine modification. Residues Asn102, Asn182, Asn220, and Asn267 are each glycosylated (N-linked (GlcNAc...) asparagine). Positions 365–389 are RCL; the sequence is GTEATAATGVATVIRRQPRTLNFNR.

This sequence belongs to the serpin family. In terms of processing, N-glycosylated. Liver.

Its subcellular location is the secreted. This Rattus norvegicus (Rat) protein is Serine protease inhibitor A3L (Serpina3l).